The sequence spans 314 residues: tRNA dimethylallyltransferase 1 (314 aa).

17 to 24 (GPTAAGKT) serves as a coordination point for ATP. 19–24 (TAAGKT) is a substrate binding site. The tract at residues 42–45 (DSRQ) is interaction with substrate tRNA.

Belongs to the IPP transferase family. As to quaternary structure, monomer. Requires Mg(2+) as cofactor.

The enzyme catalyses adenosine(37) in tRNA + dimethylallyl diphosphate = N(6)-dimethylallyladenosine(37) in tRNA + diphosphate. In terms of biological role, catalyzes the transfer of a dimethylallyl group onto the adenine at position 37 in tRNAs that read codons beginning with uridine, leading to the formation of N6-(dimethylallyl)adenosine (i(6)A). The chain is tRNA dimethylallyltransferase 1 from Syntrophotalea carbinolica (strain DSM 2380 / NBRC 103641 / GraBd1) (Pelobacter carbinolicus).